A 331-amino-acid chain; its full sequence is Tetraacyldisaccharide 4'-kinase (331 aa).

57–64 provides a ligand contact to ATP; it reads SVGGNGKT.

Belongs to the LpxK family.

It catalyses the reaction a lipid A disaccharide + ATP = a lipid IVA + ADP + H(+). The protein operates within glycolipid biosynthesis; lipid IV(A) biosynthesis; lipid IV(A) from (3R)-3-hydroxytetradecanoyl-[acyl-carrier-protein] and UDP-N-acetyl-alpha-D-glucosamine: step 6/6. In terms of biological role, transfers the gamma-phosphate of ATP to the 4'-position of a tetraacyldisaccharide 1-phosphate intermediate (termed DS-1-P) to form tetraacyldisaccharide 1,4'-bis-phosphate (lipid IVA). This Histophilus somni (strain 2336) (Haemophilus somnus) protein is Tetraacyldisaccharide 4'-kinase.